Here is a 474-residue protein sequence, read N- to C-terminus: tRNA modification GTPase MnmE (474 aa).

3 residues coordinate (6S)-5-formyl-5,6,7,8-tetrahydrofolate: R35, E92, and K135. The TrmE-type G domain maps to 231–396 (GLHVVLAGQP…LRAALLEIAG (166 aa)). N241 contacts K(+). GTP is bound by residues 241-246 (NVGKSS), 260-266 (TPIAGTT), 285-288 (DTAG), and 377-379 (SAR). Mg(2+) is bound at residue S245. The K(+) site is built by T260, I262, and T265. Position 266 (T266) interacts with Mg(2+). A (6S)-5-formyl-5,6,7,8-tetrahydrofolate-binding site is contributed by K474.

The protein belongs to the TRAFAC class TrmE-Era-EngA-EngB-Septin-like GTPase superfamily. TrmE GTPase family. As to quaternary structure, homodimer. Heterotetramer of two MnmE and two MnmG subunits. The cofactor is K(+).

It localises to the cytoplasm. Exhibits a very high intrinsic GTPase hydrolysis rate. Involved in the addition of a carboxymethylaminomethyl (cmnm) group at the wobble position (U34) of certain tRNAs, forming tRNA-cmnm(5)s(2)U34. The sequence is that of tRNA modification GTPase MnmE from Ralstonia nicotianae (strain ATCC BAA-1114 / GMI1000) (Ralstonia solanacearum).